The following is a 191-amino-acid chain: NF-kappa-B inhibitor-interacting Ras-like protein 2 (191 aa).

The segment at 1-191 (MGKSCKVVVC…KNKGSGSVDG (191 aa)) is small GTPase-like. 11-18 (GQAAVGKT) contributes to the GTP binding site. An Effector region motif is present at residues 35–43 (MIETQEDIY). GTP is bound by residues 61–65 (DTRGL) and 120–123 (NKCD). The interval 170–191 (QPQSKSAFPLSRKNKGSGSVDG) is disordered.

Belongs to the small GTPase superfamily. Ras family. KappaB-Ras subfamily.

Its subcellular location is the cytoplasm. Functionally, atypical Ras-like protein that acts as a potent regulator of NF-kappa-B activity by preventing the degradation of NF-kappa-B inhibitor beta (NFKBIB) by most signals, explaining why NFKBIB is more resistant to degradation. The polypeptide is NF-kappa-B inhibitor-interacting Ras-like protein 2 (NKIRAS2) (Gallus gallus (Chicken)).